Reading from the N-terminus, the 191-residue chain is Cytochrome c biogenesis ATP-binding export protein CcmA (191 aa).

The ABC transporter domain occupies 6–189 (LVATDIACRR…RVRTLAIRNF (184 aa)). An ATP-binding site is contributed by 38–45 (GANGIGKS).

The protein belongs to the ABC transporter superfamily. CcmA exporter (TC 3.A.1.107) family. As to quaternary structure, the complex is composed of two ATP-binding proteins (CcmA) and two transmembrane proteins (CcmB).

It is found in the cell inner membrane. It catalyses the reaction heme b(in) + ATP + H2O = heme b(out) + ADP + phosphate + H(+). Functionally, part of the ABC transporter complex CcmAB involved in the biogenesis of c-type cytochromes; once thought to export heme, this seems not to be the case, but its exact role is uncertain. Responsible for energy coupling to the transport system. This Novosphingobium aromaticivorans (strain ATCC 700278 / DSM 12444 / CCUG 56034 / CIP 105152 / NBRC 16084 / F199) protein is Cytochrome c biogenesis ATP-binding export protein CcmA.